Consider the following 190-residue polypeptide: Threonylcarbamoyl-AMP synthase (190 aa).

The region spanning 7–190 is the YrdC-like domain; the sequence is GDAIAAAIDV…ALTGELFRQG (184 aa).

This sequence belongs to the SUA5 family. TsaC subfamily.

The protein resides in the cytoplasm. It carries out the reaction L-threonine + hydrogencarbonate + ATP = L-threonylcarbamoyladenylate + diphosphate + H2O. Functionally, required for the formation of a threonylcarbamoyl group on adenosine at position 37 (t(6)A37) in tRNAs that read codons beginning with adenine. Catalyzes the conversion of L-threonine, HCO(3)(-)/CO(2) and ATP to give threonylcarbamoyl-AMP (TC-AMP) as the acyladenylate intermediate, with the release of diphosphate. This chain is Threonylcarbamoyl-AMP synthase, found in Escherichia coli O157:H7.